Here is a 430-residue protein sequence, read N- to C-terminus: D-galactonate transporter (430 aa).

Residues Met-1–Thr-17 lie on the Cytoplasmic side of the membrane. A helical membrane pass occupies residues Leu-18–Ser-39. Residues Tyr-29 and Arg-32 each coordinate D-galactonate. Residues Ala-40–Lys-50 are Periplasmic-facing. Residues Ala-51–Phe-74 form a helical membrane-spanning segment. Tyr-64 is a D-galactonate binding site. The Cytoplasmic segment spans residues Leu-75–Arg-81. The chain crosses the membrane as a helical span at residues Val-82 to Phe-100. The Periplasmic portion of the chain corresponds to Ala-101–Gly-103. A helical membrane pass occupies residues Leu-104–Asn-125. The Cytoplasmic segment spans residues Asn-126–Ala-141. A helical membrane pass occupies residues Val-142–Gln-164. At Glu-165–Ser-168 the chain is on the periplasmic side. A helical membrane pass occupies residues Trp-169–Val-190. Topologically, residues Tyr-191–Lys-241 are cytoplasmic. The helical transmembrane segment at Leu-242–Leu-267 threads the bilayer. The Periplasmic portion of the chain corresponds to Thr-268–Leu-276. A helical transmembrane segment spans residues Lys-277–Gly-297. Residues Trp-298–Arg-314 lie on the Cytoplasmic side of the membrane. The chain crosses the membrane as a helical span at residues Lys-315–Tyr-333. At Thr-334–Asp-336 the chain is on the periplasmic side. Residues Pro-337–Ala-354 form a helical membrane-spanning segment. Topologically, residues Ser-355–Thr-373 are cytoplasmic. Residue Trp-358 participates in D-galactonate binding. The helical transmembrane segment at Gly-374 to Leu-395 threads the bilayer. The Periplasmic portion of the chain corresponds to Ala-396–Gly-400. The chain crosses the membrane as a helical span at residues Phe-401–Val-423. Over Gly-424–Gly-430 the chain is Cytoplasmic.

Belongs to the major facilitator superfamily. Phthalate permease family.

Its subcellular location is the cell inner membrane. The enzyme catalyses D-galactonate(in) + H(+)(in) = D-galactonate(out) + H(+)(out). Functionally, involved in D-galactonate metabolism. Catalyzes the proton-dependent uptake of galactonate into the cell. The protein is D-galactonate transporter (dgoT) of Escherichia coli O6:H1 (strain CFT073 / ATCC 700928 / UPEC).